The chain runs to 173 residues: Pathogenesis-related protein 1C (173 aa).

The first 20 residues, 1 to 20 (MSTSAVLFLLLAVFAAGASA), serve as a signal peptide directing secretion.

The protein belongs to the thaumatin family.

This chain is Pathogenesis-related protein 1C, found in Hordeum vulgare (Barley).